The chain runs to 445 residues: UDP-N-acetylmuramoylalanine--D-glutamate ligase (445 aa).

118–124 (GTNGKTT) serves as a coordination point for ATP.

Belongs to the MurCDEF family.

The protein resides in the cytoplasm. The enzyme catalyses UDP-N-acetyl-alpha-D-muramoyl-L-alanine + D-glutamate + ATP = UDP-N-acetyl-alpha-D-muramoyl-L-alanyl-D-glutamate + ADP + phosphate + H(+). Its pathway is cell wall biogenesis; peptidoglycan biosynthesis. In terms of biological role, cell wall formation. Catalyzes the addition of glutamate to the nucleotide precursor UDP-N-acetylmuramoyl-L-alanine (UMA). The protein is UDP-N-acetylmuramoylalanine--D-glutamate ligase of Macrococcus caseolyticus (strain JCSC5402) (Macrococcoides caseolyticum).